The following is a 104-amino-acid chain: Protein U9 (104 aa).

Residues 37 to 54 (GVQGLNADCSYVKSQCIK) form a helical membrane-spanning segment.

Its subcellular location is the host membrane. The chain is Protein U9 (U9) from Human herpesvirus 6B (HHV-6 variant B).